The sequence spans 432 residues: Ciliated left-right organizer protein containing ZP-N domains homolog (432 aa).

Expressed specifically by cells of the ciliated left-right organizer.

The chain is Ciliated left-right organizer protein containing ZP-N domains homolog (ciroz) from Danio rerio (Zebrafish).